The primary structure comprises 282 residues: Protoheme IX farnesyltransferase (282 aa).

9 helical membrane-spanning segments follow: residues 9–29, 39–59, 79–99, 102–122, 139–159, 165–185, 210–230, 231–251, and 261–281; these read LAKPGIIFGNLITLTGGFLLA, LPLFVYVMIGVALMIAAGCVF, LVTGDISVIQATIYGTILLIL, LVLYYLVILLTLWIIIIGFIV, VLGGISGAIPPVAGYTAVVNI, LALFLILFFWQIPHSYAIAML, IMLFYLALFVVSCALPAVLGS, ADLFSFIVCMLVALFWMYKSI, and VFAKTVFKFSIIVITVICLTM.

It belongs to the UbiA prenyltransferase family. Protoheme IX farnesyltransferase subfamily.

It is found in the cell inner membrane. It catalyses the reaction heme b + (2E,6E)-farnesyl diphosphate + H2O = Fe(II)-heme o + diphosphate. It functions in the pathway porphyrin-containing compound metabolism; heme O biosynthesis; heme O from protoheme: step 1/1. Its function is as follows. Converts heme B (protoheme IX) to heme O by substitution of the vinyl group on carbon 2 of heme B porphyrin ring with a hydroxyethyl farnesyl side group. In Francisella tularensis subsp. tularensis (strain FSC 198), this protein is Protoheme IX farnesyltransferase.